The sequence spans 454 residues: UDP-N-acetylmuramoylalanine--D-glutamate ligase (454 aa).

Residue 119-125 (GSNGKTT) participates in ATP binding.

This sequence belongs to the MurCDEF family.

It is found in the cytoplasm. The catalysed reaction is UDP-N-acetyl-alpha-D-muramoyl-L-alanine + D-glutamate + ATP = UDP-N-acetyl-alpha-D-muramoyl-L-alanyl-D-glutamate + ADP + phosphate + H(+). The protein operates within cell wall biogenesis; peptidoglycan biosynthesis. Functionally, cell wall formation. Catalyzes the addition of glutamate to the nucleotide precursor UDP-N-acetylmuramoyl-L-alanine (UMA). In Latilactobacillus sakei subsp. sakei (strain 23K) (Lactobacillus sakei subsp. sakei), this protein is UDP-N-acetylmuramoylalanine--D-glutamate ligase.